The sequence spans 343 residues: MRAPAFWWRRPGVASALLSPIGAVVGAVALARMGKAGGRVDAPVLCIGNPTVGGAGKTPTAIALLDRLTARGATPFALLRGHGGSAPMPLRVDPAIHGADAVGDEALLLARHAPTIVAGGARLAGAAMAVETGASHIVMDDGFQNPSLHKDVSVLVVDGMVGVGNACVTPAGPLRAPLLPQLARADAVLVVGDGSAGDRVAAEATQAGCTVLRGWLVPDPAAVAALHGIPLIAFAGIGRPEKFFATLEREGLALLARHAFADHHPFRPAEIARLVEAARAQGARLVTTEKDRARLTGPAFAGPEFSGVLDAIAPLPVTLALDAPHALDALVDRAEARFQARRT.

51–58 (TVGGAGKT) contacts ATP.

It belongs to the LpxK family.

It catalyses the reaction a lipid A disaccharide + ATP = a lipid IVA + ADP + H(+). The protein operates within glycolipid biosynthesis; lipid IV(A) biosynthesis; lipid IV(A) from (3R)-3-hydroxytetradecanoyl-[acyl-carrier-protein] and UDP-N-acetyl-alpha-D-glucosamine: step 6/6. Functionally, transfers the gamma-phosphate of ATP to the 4'-position of a tetraacyldisaccharide 1-phosphate intermediate (termed DS-1-P) to form tetraacyldisaccharide 1,4'-bis-phosphate (lipid IVA). The protein is Tetraacyldisaccharide 4'-kinase of Xanthobacter autotrophicus (strain ATCC BAA-1158 / Py2).